We begin with the raw amino-acid sequence, 302 residues long: MSGNKDSDGGWKTFIWNSEKKELLGRTGCSWFKILLFYVIFYGCLAAVFVGTIQALLLTLSNYKPTHQDRVAPPGLSHTPCPEKAEITFNKHELETYMKYTKGMKEFLELYDETAQLDQLKYEDCGENPGGYKNRGDLESDIGVRKACRFKRSWLKDCSGLEDRTFGFKDGKPCVIVKLNRIVNFRPKPPNSNESIPEDAKAKVRPNVIPIYCTNKKEEDAGKLQEVKYFGIGDGFPLQYYPYYGKLLHPQYLQPLVAIQFTNLTMNTELRIECRIYGENIGYSEKDRYQGRFDIKITVNDS.

Over 1–30 the chain is Cytoplasmic; sequence MSGNKDSDGGWKTFIWNSEKKELLGRTGCS. A helical; Signal-anchor for type II membrane protein membrane pass occupies residues 31–51; that stretch reads WFKILLFYVIFYGCLAAVFVG. Over 52–302 the chain is Extracellular; it reads TIQALLLTLS…FDIKITVNDS (251 aa). 2 disulfides stabilise this stretch: Cys125/Cys148 and Cys158/Cys174. Asn193 and Asn263 each carry an N-linked (GlcNAc...) asparagine glycan. A disulfide bond links Cys213 and Cys274.

Belongs to the X(+)/potassium ATPases subunit beta family. In terms of assembly, the sodium/potassium-transporting ATPase is composed of a catalytic alpha subunit, an auxiliary non-catalytic beta subunit and an additional regulatory subunit. Glycosylated. Expressed mainly in epithelial tissues.

It localises to the cell membrane. This is the non-catalytic component of the active enzyme, which catalyzes the hydrolysis of ATP coupled with the exchange of Na(+) and K(+) ions across the plasma membrane. The beta subunit regulates, through assembly of alpha/beta heterodimers, the number of sodium pumps transported to the plasma membrane. In Anguilla anguilla (European freshwater eel), this protein is Sodium/potassium-transporting ATPase subunit beta-233.